A 258-amino-acid polypeptide reads, in one-letter code: Small ribosomal subunit protein uS15m (258 aa).

Residues 1–57 constitute a mitochondrion transit peptide; it reads MLRAAWRALSSVRAQAVTRAPVPALRGGSSASLLSARCGLQPPSLLRAARAYAAVQK. Positions 229-258 are disordered; it reads KAAAAAAKKEKNEGVPENPSNAVPEKTQVN.

It belongs to the universal ribosomal protein uS15 family. In terms of assembly, component of the mitochondrial ribosome small subunit (28S) which comprises a 12S rRNA and about 30 distinct proteins. Interacts with METTL17.

Its subcellular location is the mitochondrion matrix. This is Small ribosomal subunit protein uS15m (Mrps15) from Mus musculus (Mouse).